A 239-amino-acid chain; its full sequence is Probable transcriptional regulatory protein Aave_3203 (239 aa).

The disordered stretch occupies residues 1 to 20 (MAGHSKWANIQHRKGRQDEK).

It belongs to the TACO1 family.

The protein localises to the cytoplasm. This Paracidovorax citrulli (strain AAC00-1) (Acidovorax citrulli) protein is Probable transcriptional regulatory protein Aave_3203.